The sequence spans 369 residues: MRIASFFTVLLTLLTLNITPASAERIRDLVNIQGVRGNALIGYGLVVGLDGSGDQTMQTPFTTQSLTNMLSQLGITVPAGTNMQLKNVAAVMVTAELPPFGRTGQNIDIVVSSLGNAKSLRGGTLLMTPLKGVDNQVYALAQGNVLVGGAGASAGGSSVQVNQLAGGRISNGAVIERELPSTFGTSNTIMLQLKNDDFSMAQKVSDAINRSGYGGTASPLDSRTIQVLAPHGNSSQVRFLADVQNIEVNVGIQDAKVVINSRTGSVVMNRDVTLDSCAIAQGNLSVTINQQANVSQPNTPFGGGQTVVTPQTEISVQQTGGVLQRVNSSANLNNVVRALNSLGATPMELMSILQAMQSAGCLRAKLEII.

Residues 1-23 form the signal peptide; sequence MRIASFFTVLLTLLTLNITPASA.

Belongs to the FlgI family. In terms of assembly, the basal body constitutes a major portion of the flagellar organelle and consists of four rings (L,P,S, and M) mounted on a central rod.

The protein localises to the periplasm. The protein resides in the bacterial flagellum basal body. Its function is as follows. Assembles around the rod to form the L-ring and probably protects the motor/basal body from shearing forces during rotation. This Pectobacterium atrosepticum (strain SCRI 1043 / ATCC BAA-672) (Erwinia carotovora subsp. atroseptica) protein is Flagellar P-ring protein.